The sequence spans 446 residues: Phosphoglucosamine mutase (446 aa).

Residue S103 is the Phosphoserine intermediate of the active site. Mg(2+) is bound by residues S103, D242, D244, and D246. Phosphoserine is present on S103.

The protein belongs to the phosphohexose mutase family. It depends on Mg(2+) as a cofactor. Post-translationally, activated by phosphorylation.

It catalyses the reaction alpha-D-glucosamine 1-phosphate = D-glucosamine 6-phosphate. Its function is as follows. Catalyzes the conversion of glucosamine-6-phosphate to glucosamine-1-phosphate. In Corynebacterium urealyticum (strain ATCC 43042 / DSM 7109), this protein is Phosphoglucosamine mutase.